The primary structure comprises 299 residues: Bifunctional protein FolD (299 aa).

Residues 169-171 (GRS), Ser-194, and Ile-235 each bind NADP(+).

The protein belongs to the tetrahydrofolate dehydrogenase/cyclohydrolase family. As to quaternary structure, homodimer.

The enzyme catalyses (6R)-5,10-methylene-5,6,7,8-tetrahydrofolate + NADP(+) = (6R)-5,10-methenyltetrahydrofolate + NADPH. It carries out the reaction (6R)-5,10-methenyltetrahydrofolate + H2O = (6R)-10-formyltetrahydrofolate + H(+). It functions in the pathway one-carbon metabolism; tetrahydrofolate interconversion. Functionally, catalyzes the oxidation of 5,10-methylenetetrahydrofolate to 5,10-methenyltetrahydrofolate and then the hydrolysis of 5,10-methenyltetrahydrofolate to 10-formyltetrahydrofolate. The polypeptide is Bifunctional protein FolD (Nostoc sp. (strain PCC 7120 / SAG 25.82 / UTEX 2576)).